Reading from the N-terminus, the 160-residue chain is 2-C-methyl-D-erythritol 2,4-cyclodiphosphate synthase (160 aa).

D10 and H12 together coordinate a divalent metal cation. Residues 10 to 12 and 36 to 37 each bind 4-CDP-2-C-methyl-D-erythritol 2-phosphate; these read DVH and HS. Residue H44 participates in a divalent metal cation binding. 4-CDP-2-C-methyl-D-erythritol 2-phosphate contacts are provided by residues 58–60, 63–67, 102–108, 134–137, F141, and R144; these read DIG, FPDTD, AQAPKML, and TTTE.

Belongs to the IspF family. As to quaternary structure, homotrimer. A divalent metal cation is required as a cofactor.

It carries out the reaction 4-CDP-2-C-methyl-D-erythritol 2-phosphate = 2-C-methyl-D-erythritol 2,4-cyclic diphosphate + CMP. Its pathway is isoprenoid biosynthesis; isopentenyl diphosphate biosynthesis via DXP pathway; isopentenyl diphosphate from 1-deoxy-D-xylulose 5-phosphate: step 4/6. Its function is as follows. Involved in the biosynthesis of isopentenyl diphosphate (IPP) and dimethylallyl diphosphate (DMAPP), two major building blocks of isoprenoid compounds. Catalyzes the conversion of 4-diphosphocytidyl-2-C-methyl-D-erythritol 2-phosphate (CDP-ME2P) to 2-C-methyl-D-erythritol 2,4-cyclodiphosphate (ME-CPP) with a corresponding release of cytidine 5-monophosphate (CMP). This Shewanella amazonensis (strain ATCC BAA-1098 / SB2B) protein is 2-C-methyl-D-erythritol 2,4-cyclodiphosphate synthase.